Here is a 127-residue protein sequence, read N- to C-terminus: MTLLNTLSNFGGTWPRLIIMSMINYFTVYQCTIPGTNKVYVTHGGSMQACTELLNGTVTILRDGYYITNLICIVVGLFLYFGYLKRKILHLQSLPISSWRFFHFFFTILAVTSRAIYYKSQNWRREC.

Helical transmembrane passes span 64–84 and 101–118; these read GYYI…FGYL and FFHF…AIYY.

It is found in the membrane. This is an uncharacterized protein from Saccharomyces cerevisiae (strain ATCC 204508 / S288c) (Baker's yeast).